A 384-amino-acid polypeptide reads, in one-letter code: Anhydro-N-acetylmuramic acid kinase (384 aa).

9–16 (GTSADGVD) provides a ligand contact to ATP.

This sequence belongs to the anhydro-N-acetylmuramic acid kinase family.

The enzyme catalyses 1,6-anhydro-N-acetyl-beta-muramate + ATP + H2O = N-acetyl-D-muramate 6-phosphate + ADP + H(+). It participates in amino-sugar metabolism; 1,6-anhydro-N-acetylmuramate degradation. Its pathway is cell wall biogenesis; peptidoglycan recycling. Its function is as follows. Catalyzes the specific phosphorylation of 1,6-anhydro-N-acetylmuramic acid (anhMurNAc) with the simultaneous cleavage of the 1,6-anhydro ring, generating MurNAc-6-P. Is required for the utilization of anhMurNAc either imported from the medium or derived from its own cell wall murein, and thus plays a role in cell wall recycling. The protein is Anhydro-N-acetylmuramic acid kinase of Synechococcus sp. (strain CC9311).